Here is a 1050-residue protein sequence, read N- to C-terminus: Elongation factor 3 (1050 aa).

The ADP site is built by valine 43 and histidine 45. Residues 46 to 83 (DVPVEFFEDLKKQIQSKDAKVSLAALDAYKHIASTNGL) form an HEAT 1 repeat. Position 86 (serine 86) interacts with ADP. HEAT repeat units lie at residues 89–126 (PYVV…AITP), 127–165 (TAVK…TAKA), 169–206 (LRMP…TIDN), 208–244 (DIEK…EVTM), 245–282 (ATLS…LVED), and 288–326 (PFMD…VGAV). Threonine 395, histidine 399, and glutamate 400 together coordinate ADP. ABC transporter domains follow at residues 429–646 (DEGE…YYEL) and 672–998 (VKVS…KKDD). ADP contacts are provided by asparagine 708, glutamate 927, asparagine 930, and histidine 956. The tract at residues 980–1050 (GHNWVQGQGS…DAYVSSDEEF (71 aa)) is disordered. Over residues 1013–1037 (AAKKKKKLSSAELRKKKKERMKKKK) the composition is skewed to basic residues.

It belongs to the ABC transporter superfamily. ABCF family. EF3 subfamily. As to quaternary structure, monomer.

The protein localises to the cytoplasm. It catalyses the reaction ATP + H2O = ADP + phosphate + H(+). It functions in the pathway protein biosynthesis; polypeptide chain elongation. Its function is as follows. Ribosome-dependent ATPase that functions in cytoplasmic translation elongation. Required for the ATP-dependent release of deacylated tRNA from the ribosomal E-site during protein biosynthesis. Stimulates the eEF1A-dependent binding of aminoacyl-tRNA to the ribosomal A-site, which has reduced affinity for tRNA as long as the E-site is occupied. Assists translation termination by stimulating the release of nascent protein from the ribosome by release factors. This Candida albicans (strain SC5314 / ATCC MYA-2876) (Yeast) protein is Elongation factor 3 (CEF3).